Consider the following 605-residue polypeptide: Arginyl-tRNA--protein transferase 2 (605 aa).

The span at 496-513 (KVSSSSSSPQASETLLES) shows a compositional bias: low complexity. A disordered region spans residues 496 to 549 (KVSSSSSSPQASETLLESTSEHEDMEQGDTNDDDDEMYNSDEDSDSDSSSSRNR). Residues 518 to 541 (EDMEQGDTNDDDDEMYNSDEDSDS) show a composition bias toward acidic residues.

The protein belongs to the R-transferase family.

The enzyme catalyses an N-terminal L-alpha-aminoacyl-[protein] + L-arginyl-tRNA(Arg) = an N-terminal L-arginyl-L-aminoacyl-[protein] + tRNA(Arg) + H(+). Involved in the post-translational conjugation of arginine to the N-terminal aspartate or glutamate of a protein. This arginylation is required for degradation of the protein via the ubiquitin pathway. Component of the N-end rule pathway with ATE1 and PRT6. The N-end rule pathway regulates seed after-ripening, seedling sugar sensitivity, seedling lipid breakdown, and abscisic acid (ABA) sensitivity of germination. The end-rule pathway regulates various aspects of leaf and shoot development. Involved in the oxygen-dependent N-arginylation of RAP2-12, an activator of hypoxic gene expression. This N-terminal modification leads to ubiquitination by PRT6 and subsequent degradation of RAP2-12 under aerobic conditions. Involved in disease resistance. The end-rule pathway plays a role in regulating the timing and amplitude of the immune response following infection with the bacterial pathogen Pseudomonas syringae pv tomato. Regulates the biosynthesis of plant-defense metabolites such as glucosinolates, and the biosynthesis and response to the phytohormone jasmonate (JA), which plays a key role in plant immunity. The chain is Arginyl-tRNA--protein transferase 2 from Arabidopsis thaliana (Mouse-ear cress).